A 423-amino-acid chain; its full sequence is Pseudouridylate synthase 1 homolog (423 aa).

The disordered stretch occupies residues 32-75 (AGNKVPPALASHQPDRKGRGGWVWEETEHPAKRVKGGEDEEPPR). The segment covering 57–68 (ETEHPAKRVKGG) has biased composition (basic and acidic residues). Asp-142 serves as the catalytic Nucleophile. The interval 403-423 (ADTGAKVPSSLEGSEGDGDTD) is disordered. Ser-411 and Ser-416 each carry phosphoserine. Thr-422 is subject to Phosphothreonine.

This sequence belongs to the tRNA pseudouridine synthase TruA family. As to quaternary structure, monomer. Forms a complex with RARG and the SRA1 RNA in the nucleus.

Its subcellular location is the nucleus. It is found in the cytoplasm. The protein localises to the mitochondrion. The catalysed reaction is a uridine in tRNA = a pseudouridine in tRNA. It carries out the reaction uridine(38/39/40) in tRNA = pseudouridine(38/39/40) in tRNA. The enzyme catalyses a uridine in mRNA = a pseudouridine in mRNA. Functionally, pseudouridylate synthase that catalyzes pseudouridylation of tRNAs and mRNAs. Acts on positions 27/28 in the anticodon stem and also positions 34 and 36 in the anticodon of an intron containing tRNA. Also catalyzes pseudouridylation of mRNAs: mediates pseudouridylation of mRNAs with the consensus sequence 5'-UGUAG-3'. Acts as a regulator of pre-mRNA splicing by mediating pseudouridylation of pre-mRNAs at locations associated with alternatively spliced regions. Pseudouridylation of pre-mRNAs near splice sites directly regulates mRNA splicing and mRNA 3'-end processing. Involved in regulation of nuclear receptor activity through pseudouridylation of SRA1 mRNA. Does not form pseudouridine when expressed in vitro. The sequence is that of Pseudouridylate synthase 1 homolog from Mus musculus (Mouse).